Here is a 23-residue protein sequence, read N- to C-terminus: Phallacidin proprotein (23 aa).

P1 is a propeptide. The segment at residues 2–8 is a cross-link (cyclopeptide (Ala-Pro)); the sequence is AWLVDCP. Positions 3 to 7 form a cross-link, 2'-cysteinyl-6'-hydroxytryptophan sulfoxide (Trp-Cys); that stretch reads WLVDC. The propeptide occupies 9–23; it reads CVGDDVNRLLARGEK.

It belongs to the MSDIN fungal toxin family. In terms of processing, processed by the macrocyclase-peptidase enzyme POPB to yield a toxic cyclic heptapeptide. POPB first removes 10 residues from the N-terminus. Conformational trapping of the remaining peptide forces the enzyme to release this intermediate rather than proceed to macrocyclization. The enzyme rebinds the remaining peptide in a different conformation and catalyzes macrocyclization of the N-terminal 7 residues.

Major toxin that belongs to the bicyclic heptapeptides called phallotoxins. Although structurally related to amatoxins, phallotoxins have a different mode of action, which is the stabilization of F-actin. Phallotoxins are poisonous when administered parenterally, but not orally because of poor absorption. The sequence is that of Phallacidin proprotein from Amanita fuliginea (East Asian brown death cap).